The sequence spans 86 residues: Large ribosomal subunit protein bL27 (86 aa).

Belongs to the bacterial ribosomal protein bL27 family.

The sequence is that of Large ribosomal subunit protein bL27 from Cupriavidus metallidurans (strain ATCC 43123 / DSM 2839 / NBRC 102507 / CH34) (Ralstonia metallidurans).